We begin with the raw amino-acid sequence, 279 residues long: Acetylglutamate kinase (279 aa).

Residues 62–63 (GG), Arg-84, and Asn-177 contribute to the substrate site.

The protein belongs to the acetylglutamate kinase family. ArgB subfamily.

It localises to the cytoplasm. The enzyme catalyses N-acetyl-L-glutamate + ATP = N-acetyl-L-glutamyl 5-phosphate + ADP. It participates in amino-acid biosynthesis; L-arginine biosynthesis; N(2)-acetyl-L-ornithine from L-glutamate: step 2/4. In terms of biological role, catalyzes the ATP-dependent phosphorylation of N-acetyl-L-glutamate. The sequence is that of Acetylglutamate kinase from Pseudothermotoga lettingae (strain ATCC BAA-301 / DSM 14385 / NBRC 107922 / TMO) (Thermotoga lettingae).